Consider the following 354-residue polypeptide: Polyribonucleotide 5'-hydroxyl-kinase PF0112 (354 aa).

Gly36 to Thr43 serves as a coordination point for ATP.

Requires a divalent metal cation as cofactor.

It carries out the reaction a 5'-end dephospho-2'-deoxyribonucleoside-DNA + ATP = a 5'-end 5'-phospho-2'-deoxyribonucleoside-DNA + ADP + H(+). The enzyme catalyses a 5'-end dephospho-ribonucleoside-RNA + ATP = a 5'-end 5'-phospho-ribonucleoside-RNA + ADP + H(+). Functionally, polynucleotide kinase that can phosphorylate the 5'-hydroxyl groups of both single-stranded RNA (ssRNA) and single-stranded DNA (ssDNA). Exhibits a strong preference for ssRNA. This Pyrococcus furiosus (strain ATCC 43587 / DSM 3638 / JCM 8422 / Vc1) protein is Polyribonucleotide 5'-hydroxyl-kinase PF0112.